We begin with the raw amino-acid sequence, 213 residues long: ATP-dependent Clp protease proteolytic subunit (213 aa).

The active-site Nucleophile is Ser114. The active site involves His139.

This sequence belongs to the peptidase S14 family. As to quaternary structure, fourteen ClpP subunits assemble into 2 heptameric rings which stack back to back to give a disk-like structure with a central cavity, resembling the structure of eukaryotic proteasomes.

The protein localises to the cytoplasm. The catalysed reaction is Hydrolysis of proteins to small peptides in the presence of ATP and magnesium. alpha-casein is the usual test substrate. In the absence of ATP, only oligopeptides shorter than five residues are hydrolyzed (such as succinyl-Leu-Tyr-|-NHMec, and Leu-Tyr-Leu-|-Tyr-Trp, in which cleavage of the -Tyr-|-Leu- and -Tyr-|-Trp bonds also occurs).. In terms of biological role, cleaves peptides in various proteins in a process that requires ATP hydrolysis. Has a chymotrypsin-like activity. Plays a major role in the degradation of misfolded proteins. In Pseudomonas putida (strain ATCC 47054 / DSM 6125 / CFBP 8728 / NCIMB 11950 / KT2440), this protein is ATP-dependent Clp protease proteolytic subunit.